A 242-amino-acid chain; its full sequence is Probable transcriptional regulatory protein LBA0733 (242 aa).

A disordered region spans residues 1 to 22 (MSGHSKWHNIQGRKNAQDAKRG).

This sequence belongs to the TACO1 family.

It localises to the cytoplasm. The polypeptide is Probable transcriptional regulatory protein LBA0733 (Lactobacillus acidophilus (strain ATCC 700396 / NCK56 / N2 / NCFM)).